We begin with the raw amino-acid sequence, 1055 residues long: Inactive exonuclease DIS3L2 (1055 aa).

Disordered stretches follow at residues 1–109 (MKSA…SSPE) and 229–249 (SAAK…KARQ). The span at 17–32 (HKKKRNRPQKQNRRSK) shows a compositional bias: basic residues. The segment covering 39–59 (EDAHVEESLDGRDSSRSKAKD) has biased composition (basic and acidic residues). The span at 97–108 (PRRSASPLLSSP) shows a compositional bias: low complexity. Residues 367–446 (YVQLMPADPR…PQINAILYQN (80 aa)) form the CSD2 domain. Positions 476 to 824 (RKDLRDLCVL…VHRALAAALE (349 aa)) constitute an RNB domain. Mg(2+)-binding residues include D488 and D497.

The protein belongs to the RNR ribonuclease family. DIS3L2 subfamily.

It is found in the cytoplasm. In terms of biological role, probable inactive 3'-5'-exoribonuclease. Is unable to complement the growth defect of a yeast mutant lacking RRP44 exonuclease. The polypeptide is Inactive exonuclease DIS3L2 (Arabidopsis thaliana (Mouse-ear cress)).